Reading from the N-terminus, the 210-residue chain is Pre-mRNA-splicing factor 38 (210 aa).

Positions 181–210 (PLSSSSDEEDDDEEQISKLESNEGAVDRNI) are disordered. Residues 195 to 210 (QISKLESNEGAVDRNI) are compositionally biased toward basic and acidic residues.

Belongs to the PRP38 family. Component of the 25S U4/U6.U5 tri-snRNP particle, a subcomplex of the spliceosome.

The protein resides in the nucleus. Its function is as follows. Required for pre-mRNA splicing and maintenance of stable U6 small nuclear RNA levels. Implicated in the formation of stable and biologically active snRNP structures. As part of the U4/U6.U5 tri-snRNP particle, dispensible for spliceosome assembly, but required for conformational changes, which result in U4 snRNA release and the subsequent catalytic activation of the spliceosome. The polypeptide is Pre-mRNA-splicing factor 38 (Schizosaccharomyces pombe (strain 972 / ATCC 24843) (Fission yeast)).